We begin with the raw amino-acid sequence, 127 residues long: Fluoride-specific ion channel FluC (127 aa).

4 helical membrane-spanning segments follow: residues 4–24 (TLLA…QLGV), 35–55 (LGTL…LAFF), 71–91 (TGLC…VMFL), and 103–123 (VLLN…LVTW). The Na(+) site is built by G75 and T78.

This sequence belongs to the fluoride channel Fluc/FEX (TC 1.A.43) family.

The protein localises to the cell inner membrane. It carries out the reaction fluoride(in) = fluoride(out). Na(+) is not transported, but it plays an essential structural role and its presence is essential for fluoride channel function. Fluoride-specific ion channel. Important for reducing fluoride concentration in the cell, thus reducing its toxicity. This Pectobacterium atrosepticum (strain SCRI 1043 / ATCC BAA-672) (Erwinia carotovora subsp. atroseptica) protein is Fluoride-specific ion channel FluC.